The chain runs to 80 residues: RNA-binding protein Hfq (80 aa).

One can recognise a Sm domain in the interval 10–70; it reads DIFLNQVRKE…ISTISPMKSV (61 aa).

Belongs to the Hfq family. Homohexamer.

In terms of biological role, RNA chaperone that binds small regulatory RNA (sRNAs) and mRNAs to facilitate mRNA translational regulation in response to envelope stress, environmental stress and changes in metabolite concentrations. Also binds with high specificity to tRNAs. The sequence is that of RNA-binding protein Hfq from Ruminiclostridium cellulolyticum (strain ATCC 35319 / DSM 5812 / JCM 6584 / H10) (Clostridium cellulolyticum).